The chain runs to 673 residues: Annexin A6 (673 aa).

The residue at position 2 (Ala2) is an N-acetylalanine. Ser13 is subject to Phosphoserine. Annexin repeat units follow at residues 20-91 (FDAN…NLMR), 92-163 (PLAY…VLLQ), 175-247 (DLVQ…AVVK), 251-322 (STPE…KLCG), 363-434 (FNPD…GLMM), 435-506 (PPAH…SLAT), 521-595 (EDAQ…AIVQ), and 599-670 (NKPL…ALCG). Tyr30 is modified (phosphotyrosine). N6-acetyllysine is present on residues Lys63, Lys68, Lys75, and Lys81. Position 201 is a phosphotyrosine (Tyr201). 3 positions are modified to N6-acetyllysine: Lys306, Lys370, and Lys418. Ser422 carries the post-translational modification Phosphoserine. Lys483 is subject to N6-acetyllysine. Ser537 bears the Phosphoserine mark. Lys620 is subject to N6-acetyllysine.

It belongs to the annexin family.

Its subcellular location is the cytoplasm. It is found in the melanosome. In terms of biological role, may associate with CD21. May regulate the release of Ca(2+) from intracellular stores. This is Annexin A6 (Anxa6) from Rattus norvegicus (Rat).